The following is a 246-amino-acid chain: ATP synthase subunit b 1 (246 aa).

Residues 5 to 27 traverse the membrane as a helical segment; that stretch reads WFTFTAQVINFLVLVGLLRYFLY.

The protein belongs to the ATPase B chain family. As to quaternary structure, F-type ATPases have 2 components, F(1) - the catalytic core - and F(0) - the membrane proton channel. F(1) has five subunits: alpha(3), beta(3), gamma(1), delta(1), epsilon(1). F(0) has three main subunits: a(1), b(2) and c(10-14). The alpha and beta chains form an alternating ring which encloses part of the gamma chain. F(1) is attached to F(0) by a central stalk formed by the gamma and epsilon chains, while a peripheral stalk is formed by the delta and b chains.

Its subcellular location is the cell inner membrane. Functionally, f(1)F(0) ATP synthase produces ATP from ADP in the presence of a proton or sodium gradient. F-type ATPases consist of two structural domains, F(1) containing the extramembraneous catalytic core and F(0) containing the membrane proton channel, linked together by a central stalk and a peripheral stalk. During catalysis, ATP synthesis in the catalytic domain of F(1) is coupled via a rotary mechanism of the central stalk subunits to proton translocation. Component of the F(0) channel, it forms part of the peripheral stalk, linking F(1) to F(0). This chain is ATP synthase subunit b 1, found in Rhodopirellula baltica (strain DSM 10527 / NCIMB 13988 / SH1).